A 167-amino-acid chain; its full sequence is Ion-translocating oxidoreductase complex subunit B (167 aa).

The interval 1 to 22 (MITLIIFSFLSFLLGIILSFTA) is hydrophobic. Residues 28-87 (QEDPIVEIVNELLPQSQCAQCGYSGCYPYAKAIVENSEKINKCIPGGTDLISAISSVLSI) form the 4Fe-4S domain. The [4Fe-4S] cluster site is built by Cys-45, Cys-48, Cys-53, Cys-70, Cys-113, Cys-116, Cys-119, Cys-123, Cys-143, Cys-146, Cys-149, and Cys-153. 4Fe-4S ferredoxin-type domains lie at 104–133 (NTVL…GAPN) and 134–163 (FIHT…IKKE).

Belongs to the 4Fe4S bacterial-type ferredoxin family. RnfB subfamily. The complex is composed of six subunits: RnfA, RnfB, RnfC, RnfD, RnfE and RnfG. Requires [4Fe-4S] cluster as cofactor.

Its subcellular location is the cell inner membrane. Its function is as follows. Part of a membrane-bound complex that couples electron transfer with translocation of ions across the membrane. The protein is Ion-translocating oxidoreductase complex subunit B of Buchnera aphidicola subsp. Acyrthosiphon pisum (strain Tuc7).